We begin with the raw amino-acid sequence, 465 residues long: Azaphilone cluster-specific transcription factor azaR (465 aa).

The span at 1 to 16 (MSDSRTTTTKNNTTNH) shows a compositional bias: low complexity. The tract at residues 1–25 (MSDSRTTTTKNNTTNHKTSRQGPGS) is disordered. Residues 27-53 (CEECRRRKLRCDRQPQCQNCVDAGVYC) constitute a DNA-binding region (zn(2)-C6 fungal-type).

Its subcellular location is the nucleus. Transcription factor that regulates the expression of the gene cluster that mediates the biosynthesis of azaphilones, a class of fungal metabolites characterized by a highly oxygenated pyrano-quinone bicyclic core and exhibiting a broad range of bioactivities. This is Azaphilone cluster-specific transcription factor azaR from Aspergillus niger (strain ATCC 1015 / CBS 113.46 / FGSC A1144 / LSHB Ac4 / NCTC 3858a / NRRL 328 / USDA 3528.7).